Consider the following 281-residue polypeptide: MRVRKPAVAGYFYPAEKEKLIQQIDWSIKHELGPKALQMPKLGEKALGGVVPHAGYIYSGPVAAWLYSALAGYGKPDAIIIIGPNHYGIGAPVAVMKSGVWETPLGRVEVDGDLAELIMRHYKGVEDDFYAFSKEHSVEVQIPFIQYYFGDVRIVPIVVWRQTLSTSRELGKAVATAIREYGRYVYVLASSDFNHYEPHEVTVQKDDMAISKILKVDEAGLFEVASKFDISICGLGPIGALIVIAKELGFGNVTLLKHATSGDTSGYKDETVGYASILFHR.

This sequence belongs to the MEMO1 family.

The chain is MEMO1 family protein Pars_0062 from Pyrobaculum arsenaticum (strain DSM 13514 / JCM 11321 / PZ6).